The sequence spans 122 residues: Small ribosomal subunit protein bS6 (122 aa).

The protein belongs to the bacterial ribosomal protein bS6 family.

Functionally, binds together with bS18 to 16S ribosomal RNA. The chain is Small ribosomal subunit protein bS6 from Vibrio cholerae serotype O1 (strain ATCC 39541 / Classical Ogawa 395 / O395).